The primary structure comprises 294 residues: RNA polymerase sigma-K factor (294 aa).

The propeptide occupies 1–20 (MVTGVFAALGFVVKELVFLV). An encoded by spoIVCB region spans residues 1 to 156 (MVTGVFAALG…VNNCFFIFKS (156 aa)). The Polymerase core binding motif lies at 79–92 (DLISIGTIGLIKGI). Residues 114–165 (EIVITKGGCIHPSLIRFNIYGVRIHNGNFFHDKVNNCFFIFKSMPPLFVMNN) are not present in recombined mature factor. Positions 157–294 (MPPLFVMNNE…KEKRKKAKGK (138 aa)) are encoded by spoIIIC. The segment at residues 251–270 (QREIAKELGISRSYVSRIEK) is a DNA-binding region (H-T-H motif).

It belongs to the sigma-70 factor family.

In terms of biological role, sigma factors are initiation factors that promote the attachment of RNA polymerase to specific initiation sites and are then released. This sigma factor is responsible for the expression of sporulation specific genes in the mother cell. This chain is RNA polymerase sigma-K factor (sigK), found in Bacillus subtilis (strain 168).